The sequence spans 390 residues: MKEGRGSFSVERGPRKERETAQSGMWKGNSPAGSQGAAMEGTGGELGGQGNWGPEDAPGLLARASLIMLPWPLPLASSALTLLFGALTSLFLWYCYRLGSQDMQALGAGSRAGGVRGGPVGCSEAGGPSPGGPGDPGEGPRTEGLVSRRLRAYARRYSWAGMGRVRRAAQGGPGPGRGPGVLGIQRPGLLFLPDLPSAPFVPRDAQRHDVELLESSFPAILRDFGAVSWDFSGTTPPPRGWSPPLAPGCYQLLLYQAGRCQPSNCRRCPGAYRALRGLRSFMSANTFGNAGFSVLLPGARLEGRCGPTNARVRCHLGLKIPPGCELVVGGEPQCWAEGHCLLVDDSFLHTVAHNGSPEDGPRVVFIVDLWHPNVAGAERQALDFVFAPDP.

The disordered stretch occupies residues 1–54 (MKEGRGSFSVERGPRKERETAQSGMWKGNSPAGSQGAAMEGTGGELGGQGNWGP). Residues 1-72 (MKEGRGSFSV…RASLIMLPWP (72 aa)) lie on the Cytoplasmic side of the membrane. A compositionally biased stretch (gly residues) spans 41 to 51 (GTGGELGGQGN). Residues 73–95 (LPLASSALTLLFGALTSLFLWYC) traverse the membrane as a helical segment. At 96 to 390 (YRLGSQDMQA…ALDFVFAPDP (295 aa)) the chain is on the lumenal side. The interval 116-143 (RGGPVGCSEAGGPSPGGPGDPGEGPRTE) is disordered. The span at 128-137 (PSPGGPGDPG) shows a compositional bias: gly residues. S129 is modified (phosphoserine).

It belongs to the aspartyl/asparaginyl beta-hydroxylase family.

It is found in the membrane. This chain is Aspartate beta-hydroxylase domain-containing protein 1 (ASPHD1), found in Homo sapiens (Human).